A 145-amino-acid chain; its full sequence is D-aminoacyl-tRNA deacylase (145 aa).

Positions 137 to 138 match the Gly-cisPro motif, important for rejection of L-amino acids motif; the sequence is GP.

It belongs to the DTD family. Homodimer.

Its subcellular location is the cytoplasm. The catalysed reaction is glycyl-tRNA(Ala) + H2O = tRNA(Ala) + glycine + H(+). The enzyme catalyses a D-aminoacyl-tRNA + H2O = a tRNA + a D-alpha-amino acid + H(+). An aminoacyl-tRNA editing enzyme that deacylates mischarged D-aminoacyl-tRNAs. Also deacylates mischarged glycyl-tRNA(Ala), protecting cells against glycine mischarging by AlaRS. Acts via tRNA-based rather than protein-based catalysis; rejects L-amino acids rather than detecting D-amino acids in the active site. By recycling D-aminoacyl-tRNA to D-amino acids and free tRNA molecules, this enzyme counteracts the toxicity associated with the formation of D-aminoacyl-tRNA entities in vivo and helps enforce protein L-homochirality. In Escherichia coli O81 (strain ED1a), this protein is D-aminoacyl-tRNA deacylase.